The primary structure comprises 393 residues: Proteasome-activating nucleotidase (393 aa).

A coiled-coil region spans residues 14–53 (SDEVQLVRLLEEKIKSLQIEIENLRKELNYYKAEMEKMLS). ATP is bound by residues 178-183 (GTGKTM) and Tyr-317. A docks into pockets in the proteasome alpha-ring to cause gate opening region spans residues 391–393 (KYS).

The protein belongs to the AAA ATPase family. Homohexamer. The hexameric complex has a two-ring architecture resembling a top hat that caps the 20S proteasome core at one or both ends. Upon ATP-binding, the C-terminus of PAN interacts with the alpha-rings of the proteasome core by binding to the intersubunit pockets.

The protein resides in the cytoplasm. In terms of biological role, ATPase which is responsible for recognizing, binding, unfolding and translocation of substrate proteins into the archaeal 20S proteasome core particle. Is essential for opening the gate of the 20S proteasome via an interaction with its C-terminus, thereby allowing substrate entry and access to the site of proteolysis. Thus, the C-termini of the proteasomal ATPase function like a 'key in a lock' to induce gate opening and therefore regulate proteolysis. Unfolding activity requires energy from ATP hydrolysis, whereas ATP binding alone promotes ATPase-20S proteasome association which triggers gate opening, and supports translocation of unfolded substrates. This chain is Proteasome-activating nucleotidase, found in Saccharolobus islandicus (strain Y.N.15.51 / Yellowstone #2) (Sulfolobus islandicus).